Consider the following 320-residue polypeptide: Ribosome biogenesis protein BRX1 homolog 2 (320 aa).

Residues Met-1 to Gly-40 are disordered. Over residues Lys-17–Gly-40 the composition is skewed to basic and acidic residues. A Brix domain is found at Glu-57–Gly-260. Positions Arg-297 to Glu-320 are disordered. Positions Glu-308 to Glu-320 are enriched in acidic residues.

This sequence belongs to the BRX1 family. Expressed in roots, rosette leaves, stems, flowers, siliques and seeds.

The protein localises to the nucleus. Its subcellular location is the nucleolus. Involved in pre-rRNA processing and required for biogenesis of the large (60S) ribosomal subunit. Required for proper development. The chain is Ribosome biogenesis protein BRX1 homolog 2 from Arabidopsis thaliana (Mouse-ear cress).